The sequence spans 354 residues: Methylthioribose-1-phosphate isomerase (354 aa).

The Proton donor role is filled by Asp246.

The protein belongs to the eIF-2B alpha/beta/delta subunits family. MtnA subfamily.

It is found in the cytoplasm. Its subcellular location is the nucleus. The catalysed reaction is 5-(methylsulfanyl)-alpha-D-ribose 1-phosphate = 5-(methylsulfanyl)-D-ribulose 1-phosphate. The protein operates within amino-acid biosynthesis; L-methionine biosynthesis via salvage pathway; L-methionine from S-methyl-5-thio-alpha-D-ribose 1-phosphate: step 1/6. Its function is as follows. Catalyzes the interconversion of methylthioribose-1-phosphate (MTR-1-P) into methylthioribulose-1-phosphate (MTRu-1-P). The sequence is that of Methylthioribose-1-phosphate isomerase (mri1) from Xenopus laevis (African clawed frog).